The primary structure comprises 495 residues: Lysine--tRNA ligase (495 aa).

The Mg(2+) site is built by E406 and E413.

It belongs to the class-II aminoacyl-tRNA synthetase family. As to quaternary structure, homodimer. It depends on Mg(2+) as a cofactor.

The protein localises to the cytoplasm. It catalyses the reaction tRNA(Lys) + L-lysine + ATP = L-lysyl-tRNA(Lys) + AMP + diphosphate. The chain is Lysine--tRNA ligase from Staphylococcus aureus (strain COL).